A 48-amino-acid chain; its full sequence is Light-harvesting polypeptide B-885 beta-1 chain (48 aa).

Residues 1–20 (AEDRKSLSGLTEQEAQEFGT) lie on the Cytoplasmic side of the membrane. A helical membrane pass occupies residues 21 to 43 (LYTQGVAFVAVIAVVAHALVWAW). H37 contributes to the a bacteriochlorophyll binding site. Residues 44-48 (RPWLQ) are Periplasmic-facing.

The protein belongs to the antenna complex beta subunit family. The core complex is formed by different alpha and beta chains, binding bacteriochlorophyll molecules, and arranged most probably in tetrameric structures disposed around the reaction center. The non-pigmented gamma chains may constitute additional components.

It is found in the cell inner membrane. In terms of biological role, antenna complexes are light-harvesting systems, which transfer the excitation energy to the reaction centers. In Rhodocyclus tenuis (Rhodospirillum tenue), this protein is Light-harvesting polypeptide B-885 beta-1 chain.